Reading from the N-terminus, the 179-residue chain is Ribosome maturation factor RimM (179 aa).

The PRC barrel domain maps to 98-170; sequence PDEFWDRRLR…RIVVSGIPGL (73 aa).

The protein belongs to the RimM family. As to quaternary structure, binds ribosomal protein uS19.

Its subcellular location is the cytoplasm. In terms of biological role, an accessory protein needed during the final step in the assembly of 30S ribosomal subunit, possibly for assembly of the head region. Essential for efficient processing of 16S rRNA. May be needed both before and after RbfA during the maturation of 16S rRNA. It has affinity for free ribosomal 30S subunits but not for 70S ribosomes. The sequence is that of Ribosome maturation factor RimM from Cutibacterium acnes (strain DSM 16379 / KPA171202) (Propionibacterium acnes).